We begin with the raw amino-acid sequence, 311 residues long: Malate dehydrogenase (311 aa).

NAD(+) is bound by residues 7–13 and Asp-34; that span reads GAAGGIG. Residues Arg-81 and Arg-87 each coordinate substrate. NAD(+) contacts are provided by residues Asn-94 and 117–119; that span reads ITN. 2 residues coordinate substrate: Asn-119 and Arg-153. The Proton acceptor role is filled by His-177. Met-227 is a binding site for NAD(+).

This sequence belongs to the LDH/MDH superfamily. MDH type 1 family. As to quaternary structure, homodimer.

The catalysed reaction is (S)-malate + NAD(+) = oxaloacetate + NADH + H(+). Its function is as follows. Catalyzes the reversible oxidation of malate to oxaloacetate. The chain is Malate dehydrogenase from Vibrio parahaemolyticus serotype O3:K6 (strain RIMD 2210633).